Here is a 415-residue protein sequence, read N- to C-terminus: Serine hydroxymethyltransferase (415 aa).

(6S)-5,6,7,8-tetrahydrofolate-binding positions include leucine 122 and 126–128; that span reads GHL. Lysine 230 carries the N6-(pyridoxal phosphate)lysine modification.

This sequence belongs to the SHMT family. Homodimer. The cofactor is pyridoxal 5'-phosphate.

The protein localises to the cytoplasm. It carries out the reaction (6R)-5,10-methylene-5,6,7,8-tetrahydrofolate + glycine + H2O = (6S)-5,6,7,8-tetrahydrofolate + L-serine. It functions in the pathway one-carbon metabolism; tetrahydrofolate interconversion. It participates in amino-acid biosynthesis; glycine biosynthesis; glycine from L-serine: step 1/1. Catalyzes the reversible interconversion of serine and glycine with tetrahydrofolate (THF) serving as the one-carbon carrier. This reaction serves as the major source of one-carbon groups required for the biosynthesis of purines, thymidylate, methionine, and other important biomolecules. Also exhibits THF-independent aldolase activity toward beta-hydroxyamino acids, producing glycine and aldehydes, via a retro-aldol mechanism. This chain is Serine hydroxymethyltransferase, found in Cupriavidus taiwanensis (strain DSM 17343 / BCRC 17206 / CCUG 44338 / CIP 107171 / LMG 19424 / R1) (Ralstonia taiwanensis (strain LMG 19424)).